Reading from the N-terminus, the 88-residue chain is Cell division topological specificity factor (88 aa).

This sequence belongs to the MinE family.

Its function is as follows. Prevents the cell division inhibition by proteins MinC and MinD at internal division sites while permitting inhibition at polar sites. This ensures cell division at the proper site by restricting the formation of a division septum at the midpoint of the long axis of the cell. The polypeptide is Cell division topological specificity factor (Cronobacter sakazakii (strain ATCC BAA-894) (Enterobacter sakazakii)).